The following is a 157-amino-acid chain: UPF0251 protein CLJ_B1488 (157 aa).

The protein belongs to the UPF0251 family.

The protein is UPF0251 protein CLJ_B1488 of Clostridium botulinum (strain 657 / Type Ba4).